A 111-amino-acid chain; its full sequence is Small ribosomal subunit protein uS17 (111 aa).

It belongs to the universal ribosomal protein uS17 family. In terms of assembly, part of the 30S ribosomal subunit.

One of the primary rRNA binding proteins, it binds specifically to the 5'-end of 16S ribosomal RNA. This chain is Small ribosomal subunit protein uS17, found in Archaeoglobus fulgidus (strain ATCC 49558 / DSM 4304 / JCM 9628 / NBRC 100126 / VC-16).